A 238-amino-acid polypeptide reads, in one-letter code: Ribosome-recycling factor, mitochondrial (238 aa).

This sequence belongs to the RRF family.

It localises to the mitochondrion. Responsible for the release of ribosomes from messenger RNA at the termination of protein biosynthesis. May increase the efficiency of translation by recycling ribosomes from one round of translation to another. This is Ribosome-recycling factor, mitochondrial from Caenorhabditis elegans.